The primary structure comprises 198 residues: Tumor necrosis factor receptor superfamily member 22 (198 aa).

Topologically, residues 1–20 (MFGFFCSLVSSLSRWFLWRR) are cytoplasmic. The chain crosses the membrane as a helical; Signal-anchor for type II membrane protein span at residues 21-41 (LLLLLLLLLLNLPLQVKFAML). The Extracellular portion of the chain corresponds to 42–198 (ELHSFKCPAG…SVVVFRIIRR (157 aa)). 3 TNFR-Cys repeats span residues 47–82 (KCPA…QGQC), 84–124 (KCHP…DRKC), and 125–165 (QCRT…NTVC). Disulfide bonds link Cys48–Cys59, Cys60–Cys73, Cys63–Cys82, Cys85–Cys100, Cys103–Cys116, Cys106–Cys124, Cys126–Cys141, Cys144–Cys157, and Cys147–Cys165. Asn62 carries N-linked (GlcNAc...) asparagine glycosylation. N-linked (GlcNAc...) asparagine glycosylation occurs at Asn158.

Ubiquitous.

It is found in the cell membrane. The protein localises to the secreted. Functionally, receptor for the cytotoxic ligand TNFSF10/TRAIL. Lacks a cytoplasmic death domain and hence is not capable of inducing apoptosis. Protects cells against TRAIL mediated apoptosis possibly through ligand competition. Cannot induce the NF-kappa-B pathway. The chain is Tumor necrosis factor receptor superfamily member 22 (Tnfrsf22) from Mus musculus (Mouse).